A 611-amino-acid chain; its full sequence is Protein Pixie (611 aa).

2 consecutive 4Fe-4S ferredoxin-type domains span residues arginine 15–leucine 45 and lysine 54–leucine 83. ABC transporter domains follow at residues isoleucine 78–glycine 323 and isoleucine 350–leucine 570. Residues glycine 118 to serine 125 and glycine 387 to threonine 394 each bind ATP.

This sequence belongs to the ABC transporter superfamily. ABCE family. Interacts with components of eIF3 complex, namely eIF3a, eIF3j, eIF3b, eIF3c and eIF3i. Associates with the 40S ribosome subunit in an ATP-dependent manner and independently from the presence of the eIF3 complex. Forms a complex with Git and Pak; the interaction with Pak may be mediated by pix/dPIX. In terms of processing, ubiquitinated by Cnot4. Ubiquitination mediates the recruitment of autophagy receptors to the mitochondrial outer membrane and initiates mitophagy. In terms of tissue distribution, expressed in early and late larval imaginal disks (at protein level).

It is found in the cytoplasm. Functionally, plays a role in translation initiation and quality control of translation. Together with pelo and HBS1, is required for 48S complex formation from 80S ribosomes and dissociation of vacant 80S ribosomes. Stabilizes core components of eIF3 complex promoting their assembly into translation initiation-competent complexes. Together with pelo and HBS1, recognizes stalled ribosomes and promotes dissociation of elongation complexes assembled on non-stop mRNAs; this triggers endonucleolytic cleavage of the mRNA, a mechanism to release non-functional ribosomes and to degrade damaged mRNAs as part of the No-Go Decay (NGD) pathway. Plays a role in the regulation of mRNA turnover. Plays a role in quality control of translation of mitochondrial outer membrane-localized mRNA. As part of the Pink1-regulated signaling, ubiquitinated by Cnot4 upon mitochondria damage; this modification generates polyubiquitin signals that recruits autophagy receptors to the mitochondrial outer membrane to initiate mitophagy. Required in the wing disk for cell division and growth as well as cell survival. During muscle embryogenesis, required for the recruitment of Pak to muscle attachments in the embryo, hence may play a role in proper muscle morphogenesis and proper guidance and targeting of subsets of myotubes. This Drosophila melanogaster (Fruit fly) protein is Protein Pixie.